Reading from the N-terminus, the 283-residue chain is MMRIALFLATNFAVMIVLGIILSVTGIAGNSTGGILIMSVLFGFAGSLISLFMSKTMALKSVGAEIITEPRNNAERWLVETVKRQSQQAGIPMPDVAIYHSADVNAFATGATKSNSLVAVSTGLLNTMTEDEAEAVVAHEVAHIANGDMVTMTLLQGVLNTFVIFLSRMIATAVSSSRNDDGEETQSSGTYFLVSMVLEILFGVLATIIAMWFSRYREFRADAGSAQLVGKEKMIAALQRLQRVHDPEELPGSLNAMMINGKAKEFFMSHPPLEKRIEALRNL.

Helical transmembrane passes span 4–24 (IALFLATNFAVMIVLGIILSV) and 33–53 (GGILIMSVLFGFAGSLISLFM). Residue His139 participates in Zn(2+) binding. Glu140 is an active-site residue. Position 143 (His143) interacts with Zn(2+). Helical transmembrane passes span 147–167 (GDMVTMTLLQGVLNTFVIFLS) and 192–212 (FLVSMVLEILFGVLATIIAMW). A Zn(2+)-binding site is contributed by Glu218.

The protein belongs to the peptidase M48B family. Zn(2+) serves as cofactor.

It localises to the cell inner membrane. The polypeptide is Protease HtpX (Glaesserella parasuis serovar 5 (strain SH0165) (Haemophilus parasuis)).